The following is a 360-amino-acid chain: NAD(P)H-quinone oxidoreductase subunit 1, chloroplastic (360 aa).

9 helical membrane-spanning segments follow: residues Ile-27–Ile-47, Phe-98–Phe-118, Ile-129–Gly-149, Ala-165–Leu-185, Phe-203–Leu-223, Tyr-248–Ser-268, Leu-269–Leu-289, Ile-297–Ile-317, and Phe-340–Leu-360.

Belongs to the complex I subunit 1 family. NDH is composed of at least 16 different subunits, 5 of which are encoded in the nucleus.

It is found in the plastid. The protein resides in the chloroplast thylakoid membrane. The enzyme catalyses a plastoquinone + NADH + (n+1) H(+)(in) = a plastoquinol + NAD(+) + n H(+)(out). It catalyses the reaction a plastoquinone + NADPH + (n+1) H(+)(in) = a plastoquinol + NADP(+) + n H(+)(out). Functionally, NDH shuttles electrons from NAD(P)H:plastoquinone, via FMN and iron-sulfur (Fe-S) centers, to quinones in the photosynthetic chain and possibly in a chloroplast respiratory chain. The immediate electron acceptor for the enzyme in this species is believed to be plastoquinone. Couples the redox reaction to proton translocation, and thus conserves the redox energy in a proton gradient. This chain is NAD(P)H-quinone oxidoreductase subunit 1, chloroplastic, found in Barbarea verna (Land cress).